A 689-amino-acid chain; its full sequence is Glycine--tRNA ligase beta subunit (689 aa).

Belongs to the class-II aminoacyl-tRNA synthetase family. Tetramer of two alpha and two beta subunits.

The protein resides in the cytoplasm. The catalysed reaction is tRNA(Gly) + glycine + ATP = glycyl-tRNA(Gly) + AMP + diphosphate. This chain is Glycine--tRNA ligase beta subunit, found in Shewanella pealeana (strain ATCC 700345 / ANG-SQ1).